The chain runs to 488 residues: MKYSDLRDFIAQLESRELLKRIDYPVSPHLEMTLVSDKVLRSGGPALLFTNTPNYNMPVLTNLFGTVERVALGMGEESIVALREIGKLLAALKEPDPPKGFKDAFSKLPLLKQALNMAPKYVSGAECQTHVWEKDEVDLTLLPIQTCWPGDVAPLITWGLVTTRGPHQSRENMGIYRQQLLSKNKLIMRWLSHRGGALDYQAWQQEYPKERFPVAVTLGADPATILAAVTPVPDTLSEYAFAGLLRGQRTRLTRCIGNDLHVPASAEIVLEGYLEPGNEAPEGPYGDHTGYYNEVQSFPVFTVERITHRDKPIYHSTYTGRPPDEPAILGVALNEVFIPLLQKQFPEIVDFYLPPEGCSYRLAVVTIKKQYPGHAKRIMMAVWSFLRQFMYTKFVIVCDDDVDARNWQDVIWAMTTRMDPSRDTVMVENTPIDYLDFASPVSGLGSKMGMDATSKWPGETQREWGKPITMDEDVLNRVNGYWSLLGLK.

Asparagine 172 is a binding site for Mn(2+). Prenylated FMN is bound by residues 175–177 (IYR), 189–191 (RWL), and 194–195 (RG). Glutamate 238 is a Mn(2+) binding site. Residue aspartate 287 is the Proton donor of the active site.

The protein belongs to the UbiD family. In terms of assembly, homohexamer. Prenylated FMN serves as cofactor. Requires Mn(2+) as cofactor.

The protein localises to the cell membrane. The enzyme catalyses a 4-hydroxy-3-(all-trans-polyprenyl)benzoate + H(+) = a 2-(all-trans-polyprenyl)phenol + CO2. The protein operates within cofactor biosynthesis; ubiquinone biosynthesis. Its function is as follows. Catalyzes the decarboxylation of 3-octaprenyl-4-hydroxy benzoate to 2-octaprenylphenol, an intermediate step in ubiquinone biosynthesis. The polypeptide is 3-octaprenyl-4-hydroxybenzoate carboxy-lyase (Legionella pneumophila subsp. pneumophila (strain Philadelphia 1 / ATCC 33152 / DSM 7513)).